The following is a 569-amino-acid chain: Glutamate--tRNA ligase (569 aa).

The short motif at 99-109 (PEPNGYPTLGH) is the 'HIGH' region element.

This sequence belongs to the class-I aminoacyl-tRNA synthetase family. Glutamate--tRNA ligase type 2 subfamily.

It localises to the cytoplasm. The enzyme catalyses tRNA(Glu) + L-glutamate + ATP = L-glutamyl-tRNA(Glu) + AMP + diphosphate. Its function is as follows. Catalyzes the attachment of glutamate to tRNA(Glu) in a two-step reaction: glutamate is first activated by ATP to form Glu-AMP and then transferred to the acceptor end of tRNA(Glu). In Korarchaeum cryptofilum (strain OPF8), this protein is Glutamate--tRNA ligase.